We begin with the raw amino-acid sequence, 520 residues long: N-acetylgalactosamine-6-sulfatase (520 aa).

Positions 1–23 are cleaved as a signal peptide; the sequence is MAACTAAQQLLLVLSALGLLAAG. The segment at 24 to 377 is catalytic domain; that stretch reads APQPPNIVLL…PTMLKGQMMD (354 aa). Ca(2+) contacts are provided by D36, D37, and C76. Catalysis depends on C76, which acts as the Nucleophile. 3-oxoalanine (Cys) is present on C76. H139 is an active-site residue. Residue N201 is glycosylated (N-linked (GlcNAc...) asparagine). Ca(2+)-binding residues include D286 and N287. C306 and C417 form a disulfide bridge. A glycan (N-linked (GlcNAc...) asparagine) is linked at N421. Cystine bridges form between C487–C516 and C499–C505.

This sequence belongs to the sulfatase family. As to quaternary structure, homodimer. It depends on Ca(2+) as a cofactor. The conversion to 3-oxoalanine (also known as C-formylglycine, FGly), of a serine or cysteine residue in prokaryotes and of a cysteine residue in eukaryotes, is critical for catalytic activity. In terms of tissue distribution, widely expressed. Higher expression in liver and kidney.

It localises to the lysosome. The catalysed reaction is Hydrolysis of the 6-sulfate groups of the N-acetyl-D-galactosamine 6-sulfate units of chondroitin sulfate and of the D-galactose 6-sulfate units of keratan sulfate.. In Mus musculus (Mouse), this protein is N-acetylgalactosamine-6-sulfatase (Galns).